A 94-amino-acid polypeptide reads, in one-letter code: Small ribosomal subunit protein uS19 (94 aa).

Belongs to the universal ribosomal protein uS19 family.

Protein S19 forms a complex with S13 that binds strongly to the 16S ribosomal RNA. The sequence is that of Small ribosomal subunit protein uS19 from Carboxydothermus hydrogenoformans (strain ATCC BAA-161 / DSM 6008 / Z-2901).